A 1069-amino-acid polypeptide reads, in one-letter code: MPLNKDIKKVLVVGSGPIVIGQAAEFDYSGTQACEALKSEGIEVVLINSNPATIMTDKEVADKVYLEPLTLEFIEKVIVKERPDSLLAGMGGQTGLNLAVELHDSGILEKYDVKVIGTSIESIKEGEDRELFRDMMNRIGEPVIKSEIVTDLQSGIDFANKIGYPVIVRPAYTLGGSGGGIADDEEELRIILESGLQLSTIGQVLLEKSVKGWKEIEYEVMRDSYGNCITVCNMENIDPVGIHTGDSIVVAPSQTLSDKEYQMLRTASINIINSVGIEGGCNVQFSLNPNTFEYAVIEINPRVSRSSALASKATGYPIAKLAAKIALGYGLDEIKNAVTQKTYACFEPTLDYVVVKIPKWPFDKFFGADRQLGTKMMATGEIMAIGANFEQAFLKGIRSLEIGKYSLDHKKFKEHSMSELKDLVMKPDDERIFALAEMLRRDYMIERINKITGIDKFFLEKIKWIVEEEQRLKLSKIEDLDKEWLQNLKKKGFSDKAIADMLKVSPEDIYRLRDIWSIKPSYKMVDTCGGEFEALSPYYYSTYEQYDEVEVSNRRKVIVIGSGPIRIGQGIEFDYASVHCVKALKKLDIETIIVNNNPETVSTDFDISDKLYFEPLTEEDVLNIIEKENPYGVILQFGGQTAIKLANFLKEKNIKTLGTTADQIDMAEDREKFDELLERLDISRPKGKGIWSVEEGLEEAERLGFPVLVRPSYVIGGQGMEITHDEEELIFYLTNAFVKDKKNPILIDKYLMGREIEVDAISDGENILIPGIMEHLERAGVHSGDSVTMYPSQNVCDEIKGKILEYTKKLALAIGIKGMINIQFIEFEGNLYVIEVNPRASRTVPYISKVSKVPIVDIATQVMMGAKLNDLGYGVDIYKEPELVSVKVPVFSTQKLPNVEVCLGPEMRSTGEVLGVGRNLKEALYKGFVGANMYPSKEKGKILATINKHNKAEFLPIAKDLAKVGYKFIATTGTCKLLREEGIDAEEVRKIDEEKPNILDIVKNREVDLVVNTPTKGNDSKRDGFLIRRAAVERNLGVITALDTLRAIADVELEEFDKNKDLEVFDITK.

The carboxyphosphate synthetic domain stretch occupies residues 1 to 401; sequence MPLNKDIKKV…AFLKGIRSLE (401 aa). R129, R169, G175, G176, K208, V210, E215, G241, I242, H243, Q284, and E298 together coordinate ATP. The ATP-grasp 1 domain occupies 133 to 327; that stretch reads RDMMNRIGEP…IAKLAAKIAL (195 aa). Q284, E298, and N300 together coordinate Mg(2+). Mn(2+) is bound by residues Q284, E298, and N300. An oligomerization domain region spans residues 402–549; the sequence is IGKYSLDHKK…YSTYEQYDEV (148 aa). The interval 550–932 is carbamoyl phosphate synthetic domain; it reads EVSNRRKVIV…ALYKGFVGAN (383 aa). One can recognise an ATP-grasp 2 domain in the interval 674–864; sequence DELLERLDIS…IVDIATQVMM (191 aa). ATP contacts are provided by R710, K749, L751, E755, G780, V781, H782, S783, Q823, and E835. Residues Q823, E835, and N837 each contribute to the Mg(2+) site. Mn(2+) contacts are provided by Q823, E835, and N837. In terms of domain architecture, MGS-like spans 932-1069; sequence NMYPSKEKGK…KDLEVFDITK (138 aa). An allosteric domain region spans residues 933 to 1069; that stretch reads MYPSKEKGKI…KDLEVFDITK (137 aa).

This sequence belongs to the CarB family. In terms of assembly, composed of two chains; the small (or glutamine) chain promotes the hydrolysis of glutamine to ammonia, which is used by the large (or ammonia) chain to synthesize carbamoyl phosphate. Tetramer of heterodimers (alpha,beta)4. Mg(2+) serves as cofactor. Requires Mn(2+) as cofactor.

The catalysed reaction is hydrogencarbonate + L-glutamine + 2 ATP + H2O = carbamoyl phosphate + L-glutamate + 2 ADP + phosphate + 2 H(+). It catalyses the reaction hydrogencarbonate + NH4(+) + 2 ATP = carbamoyl phosphate + 2 ADP + phosphate + 2 H(+). It functions in the pathway amino-acid biosynthesis; L-arginine biosynthesis; carbamoyl phosphate from bicarbonate: step 1/1. The protein operates within pyrimidine metabolism; UMP biosynthesis via de novo pathway; (S)-dihydroorotate from bicarbonate: step 1/3. Functionally, large subunit of the glutamine-dependent carbamoyl phosphate synthetase (CPSase). CPSase catalyzes the formation of carbamoyl phosphate from the ammonia moiety of glutamine, carbonate, and phosphate donated by ATP, constituting the first step of 2 biosynthetic pathways, one leading to arginine and/or urea and the other to pyrimidine nucleotides. The large subunit (synthetase) binds the substrates ammonia (free or transferred from glutamine from the small subunit), hydrogencarbonate and ATP and carries out an ATP-coupled ligase reaction, activating hydrogencarbonate by forming carboxy phosphate which reacts with ammonia to form carbamoyl phosphate. This chain is Carbamoyl phosphate synthase large chain, found in Clostridium botulinum (strain Eklund 17B / Type B).